Reading from the N-terminus, the 493-residue chain is MGNYFNTLNLRQQLDQLGRCRFMEREEFADGVNFLKGKKIVIIGCGAQGLNQGLNMRDSGLDIAYALRPEAIEEKRASFQRASENGFVVGAYQQLIPTADLVINLTPDKQHSKVVADVMPLIKQGAALGYSHGLNIVEVGEKIRQDITVVMVAPKCPGTEVREEFKRGFGVPTLIAVHPENDPKGEGLAIAKAWAAATGGHRAGVLESSFVAEVKSDLMGEQTILCGMLQAGSLVCYDKLIADGKDPAYAGKLIQYGWETITEALKQGGITLMMDRLSNSAKLRAFSLSEQIKEKLDFLFKKHMDDIISGEFSRVMMEDWANGDANLLKWREQTGKTAFENAPKGENIKISEQEYFDHGVLMVAMVKAGVELAFDTMVETGIYEESAYYESLHELPLIANTIARKRLYEMNVVISDTAEYGNYLFANVAAPILAKEIIPTLKRGDLGESTPATEIDNILLRDVNDAIRQHPIELIGQELRGYMTDMKRISSQG.

A KARI N-terminal Rossmann domain is found at 14–208; the sequence is LDQLGRCRFM…GGHRAGVLES (195 aa). NADP(+) is bound by residues 45-48, Arg-68, Arg-76, Ser-78, and 108-110; these read CGAQ and DKQ. Residue His-132 is part of the active site. Gly-158 contributes to the NADP(+) binding site. 2 KARI C-terminal knotted domains span residues 209–345 and 346–486; these read SFVA…APKG and ENIK…MTDM. The Mg(2+) site is built by Asp-217, Glu-221, Glu-390, and Glu-394. Ser-415 provides a ligand contact to substrate.

The protein belongs to the ketol-acid reductoisomerase family. Requires Mg(2+) as cofactor.

The enzyme catalyses (2R)-2,3-dihydroxy-3-methylbutanoate + NADP(+) = (2S)-2-acetolactate + NADPH + H(+). The catalysed reaction is (2R,3R)-2,3-dihydroxy-3-methylpentanoate + NADP(+) = (S)-2-ethyl-2-hydroxy-3-oxobutanoate + NADPH + H(+). It functions in the pathway amino-acid biosynthesis; L-isoleucine biosynthesis; L-isoleucine from 2-oxobutanoate: step 2/4. Its pathway is amino-acid biosynthesis; L-valine biosynthesis; L-valine from pyruvate: step 2/4. Its function is as follows. Involved in the biosynthesis of branched-chain amino acids (BCAA). Catalyzes an alkyl-migration followed by a ketol-acid reduction of (S)-2-acetolactate (S2AL) to yield (R)-2,3-dihydroxy-isovalerate. In the isomerase reaction, S2AL is rearranged via a Mg-dependent methyl migration to produce 3-hydroxy-3-methyl-2-ketobutyrate (HMKB). In the reductase reaction, this 2-ketoacid undergoes a metal-dependent reduction by NADPH to yield (R)-2,3-dihydroxy-isovalerate. The polypeptide is Ketol-acid reductoisomerase (NADP(+)) (Histophilus somni (strain 129Pt) (Haemophilus somnus)).